A 642-amino-acid polypeptide reads, in one-letter code: Threonine--tRNA ligase (642 aa).

One can recognise a TGS domain in the interval 1–61 (MPIITLPDGS…EQDSQLAIIT (61 aa)). A catalytic region spans residues 243 to 534 (DHRKIGKQLD…LTEEYAGFFP (292 aa)). Residues Cys334, His385, and His511 each contribute to the Zn(2+) site.

It belongs to the class-II aminoacyl-tRNA synthetase family. Homodimer. The cofactor is Zn(2+).

It localises to the cytoplasm. It carries out the reaction tRNA(Thr) + L-threonine + ATP = L-threonyl-tRNA(Thr) + AMP + diphosphate + H(+). Catalyzes the attachment of threonine to tRNA(Thr) in a two-step reaction: L-threonine is first activated by ATP to form Thr-AMP and then transferred to the acceptor end of tRNA(Thr). Also edits incorrectly charged L-seryl-tRNA(Thr). In Proteus mirabilis (strain HI4320), this protein is Threonine--tRNA ligase.